The sequence spans 234 residues: Synaptogyrin-4 (234 aa).

In terms of domain architecture, MARVEL spans 18 to 169; sequence FLRRPKTITR…QAYLAFQDLR (152 aa). A run of 4 helical transmembrane segments spans residues 25 to 45, 66 to 86, 104 to 124, and 145 to 165; these read ITRVFEGVFSLIVFSSLLTDG, CSFAVGAGFLAFLSCLAFLVL, LLDFILAVLWAVVWFMGFCFL, and AAIAFTFFSILVWIFQAYLAF.

This sequence belongs to the synaptogyrin family.

The protein resides in the membrane. This Homo sapiens (Human) protein is Synaptogyrin-4 (SYNGR4).